We begin with the raw amino-acid sequence, 489 residues long: Cysteine--tRNA ligase (489 aa).

Residue Cys-29 participates in Zn(2+) binding. The short motif at 31–41 is the 'HIGH' region element; it reads ITSYDYCHIGH. Cys-209, His-234, and Glu-238 together coordinate Zn(2+). The short motif at 266 to 270 is the 'KMSKS' region element; the sequence is KMSKS. Lys-269 is an ATP binding site.

This sequence belongs to the class-I aminoacyl-tRNA synthetase family. Monomer. Zn(2+) serves as cofactor.

It is found in the cytoplasm. It catalyses the reaction tRNA(Cys) + L-cysteine + ATP = L-cysteinyl-tRNA(Cys) + AMP + diphosphate. The protein is Cysteine--tRNA ligase of Desulfotalea psychrophila (strain LSv54 / DSM 12343).